Consider the following 486-residue polypeptide: Shugoshin-1 (486 aa).

Positions 71 to 154 (IEVSRVELQK…QNRAKILEKK (84 aa)) form a coiled coil. Disordered stretches follow at residues 137-163 (MSKTSNNQQNRAKILEKKTRSSKCAPT), 187-209 (YTSCHEPPQDKTNKRCTNRRKSE), 222-251 (HSCRPHVEYNGSSHDDDPRKTRRRRSARLN), 323-346 (AGSSVAGGEAHKFDIEDPEPPRKS), 382-403 (PIQHEQKRKLSRRKSSRLDPGP), and 418-467 (TVAP…SRRA). A compositionally biased stretch (basic and acidic residues) spans 331–346 (EAHKFDIEDPEPPRKS). Residues 387–396 (QKRKLSRRKS) show a composition bias toward basic residues. Residues 423 to 433 (APSSSNALIEQ) are compositionally biased toward polar residues.

This sequence belongs to the shugoshin family. Highly expressed in roots. Expressed in panicles. Expressed at low levels in leaves.

It is found in the nucleus. Its subcellular location is the nucleolus. It localises to the chromosome. The protein resides in the centromere. Its function is as follows. Plays a central role in chromosome cohesion during meiosis I by preventing premature dissociation of cohesin complex from centromeres after prophase, when most of cohesin complex dissociates from chromosomes arms. Required for the timely assembly and maintenance of synaptonemal complex (SC) during early prophase I. Required for maintenance of centromeric cohesion before prophase II and correct segregation of chromatids during meiosis II. Has apparently no function in mitosis. In Oryza sativa subsp. japonica (Rice), this protein is Shugoshin-1.